The chain runs to 455 residues: Alcohol acyl transferase 1 allele RGb (455 aa).

Residues His164 and Asn385 each act as proton acceptor in the active site.

Belongs to the plant acyltransferase family.

In terms of biological role, involved in the biosynthesis of volatile esters which confer ripe apple fruit flavor. Alcohol acyl transferase that can use a wide range of alcohols as substrate to produce esters. This is Alcohol acyl transferase 1 allele RGb from Malus domestica (Apple).